The chain runs to 487 residues: Cytochrome P450 2C16 (487 aa).

Residue Cys432 participates in heme binding.

Belongs to the cytochrome P450 family. It depends on heme as a cofactor. As to expression, expressed constitutively in liver, lung, testes, and kidney.

The protein localises to the endoplasmic reticulum membrane. Its subcellular location is the microsome membrane. It carries out the reaction an organic molecule + reduced [NADPH--hemoprotein reductase] + O2 = an alcohol + oxidized [NADPH--hemoprotein reductase] + H2O + H(+). In terms of biological role, cytochromes P450 are a group of heme-thiolate monooxygenases. In liver microsomes, this enzyme is involved in an NADPH-dependent electron transport pathway. It oxidizes a variety of structurally unrelated compounds, including steroids, fatty acids, and xenobiotics. This is Cytochrome P450 2C16 (CYP2C16) from Oryctolagus cuniculus (Rabbit).